Consider the following 88-residue polypeptide: Probable Fe(2+)-trafficking protein (88 aa).

It belongs to the Fe(2+)-trafficking protein family.

In terms of biological role, could be a mediator in iron transactions between iron acquisition and iron-requiring processes, such as synthesis and/or repair of Fe-S clusters in biosynthetic enzymes. The sequence is that of Probable Fe(2+)-trafficking protein from Neisseria gonorrhoeae (strain ATCC 700825 / FA 1090).